We begin with the raw amino-acid sequence, 30 residues long: U-actitoxin-Bcg2a (30 aa).

The cysteines at positions 7 and 27 are disulfide-linked.

The protein resides in the secreted. The protein localises to the nematocyst. In terms of biological role, possible voltage-gated potassium channel (Kv) blocker. In Bunodosoma cangicum (Sea anemone), this protein is U-actitoxin-Bcg2a.